We begin with the raw amino-acid sequence, 155 residues long: SsrA-binding protein (155 aa).

Residues 135 to 147 (TIKRRDQERDIKK) show a composition bias toward basic and acidic residues. Residues 135–155 (TIKRRDQERDIKKQMKHYNAR) are disordered.

This sequence belongs to the SmpB family.

It localises to the cytoplasm. In terms of biological role, required for rescue of stalled ribosomes mediated by trans-translation. Binds to transfer-messenger RNA (tmRNA), required for stable association of tmRNA with ribosomes. tmRNA and SmpB together mimic tRNA shape, replacing the anticodon stem-loop with SmpB. tmRNA is encoded by the ssrA gene; the 2 termini fold to resemble tRNA(Ala) and it encodes a 'tag peptide', a short internal open reading frame. During trans-translation Ala-aminoacylated tmRNA acts like a tRNA, entering the A-site of stalled ribosomes, displacing the stalled mRNA. The ribosome then switches to translate the ORF on the tmRNA; the nascent peptide is terminated with the 'tag peptide' encoded by the tmRNA and targeted for degradation. The ribosome is freed to recommence translation, which seems to be the essential function of trans-translation. The polypeptide is SsrA-binding protein (Streptococcus pyogenes serotype M6 (strain ATCC BAA-946 / MGAS10394)).